The chain runs to 358 residues: Heme A synthase (358 aa).

Transmembrane regions (helical) follow at residues 22 to 42 (IQVW…VGGA), 107 to 127 (VLGR…WATK), 133 to 153 (ILFP…IGWW), 172 to 192 (LAFH…LSRG), 208 to 228 (FAAW…LVAG), 269 to 289 (FIHR…AFYV), 302 to 322 (AFLI…TLLH), and 324 to 344 (VPIS…CFAV). Residue His-271 participates in heme binding. His-332 serves as a coordination point for heme.

This sequence belongs to the COX15/CtaA family. Type 2 subfamily. In terms of assembly, interacts with CtaB. Requires heme b as cofactor.

Its subcellular location is the cell membrane. The enzyme catalyses Fe(II)-heme o + 2 A + H2O = Fe(II)-heme a + 2 AH2. The protein operates within porphyrin-containing compound metabolism; heme A biosynthesis; heme A from heme O: step 1/1. In terms of biological role, catalyzes the conversion of heme O to heme A by two successive hydroxylations of the methyl group at C8. The first hydroxylation forms heme I, the second hydroxylation results in an unstable dihydroxymethyl group, which spontaneously dehydrates, resulting in the formyl group of heme A. This is Heme A synthase from Bartonella tribocorum (strain CIP 105476 / IBS 506).